Consider the following 536-residue polypeptide: Multifunctional cytochrome P450 monooxygenase af510 (536 aa).

The helical transmembrane segment at 4–24 (ELSTLQLSCVAFVAFMAVLVF) threads the bilayer. N-linked (GlcNAc...) asparagine glycosylation is found at Asn210 and Asn293. Cys448 is a binding site for heme.

This sequence belongs to the cytochrome P450 family. The cofactor is heme.

The protein resides in the membrane. It carries out the reaction (+)-exo-beta-bergamotene + 2 reduced [NADPH--hemoprotein reductase] + 3 O2 = 5-dehydro-6-demethoxyfumagillol + 2 oxidized [NADPH--hemoprotein reductase] + 3 H2O + 2 H(+). It participates in secondary metabolite biosynthesis; terpenoid biosynthesis. Its function is as follows. Multifunctional cytochrome P450 monooxygenase; part of the gene cluster that mediates the biosynthesis of fumagillin, a meroterpenoid that has numerous biological activities including irreversible inhibition of human type 2 methionine aminopeptidase (METAP2). Within the pathway, the multifunctional cytochrome P450 monooxygenase af510 acts as a 2,4,6-trichlorophenol monooxygenase that first performs the C-H hydroxylation at the bridgehead C5 position to yield 5R-hydroxyl-beta-trans-bergamotene. Subsequently, a four electron oxidation initiated at C-9 coupled to cleavage of the cyclobutane C5-C8 bond of the bicyclo[3.1.1] core yields the epoxyketone intermediate 5-keto-cordycol. An additional epoxidation reaction also catalyzed by af510 then furnishes the characteristic bisepoxide ketone 5-keto-demethoxyfumagillol. The pathway begins with the conversion of farnesyl pyrophosphate (FPP) to beta-trans-bergamotene by the membrane-bound beta-trans-bergamotene synthase af520. The multifunctional cytochrome P450 monooxygenase af510 then converts beta-trans-bergamotene into 5-keto-demethoxyfumagillol via several oxydation steps. 5-keto-demethoxyfumagillol is then subjected to successive C-6 hydroxylation and O-methylation by the dioxygenase af480 and O-methyltransferase af390-400, respectively, to yield 5-keto-fumagillol, which is then stereoselectively reduced by the keto-reductase af490 to 5R-hydroxy-seco-sesquiterpene. The next step is the polyketide transferase af380-catalyzed transfer of a dodecapentaenoyl group synthesized by the polyketide synthase af370 onto 5R-hydroxy-seco-sesquiterpene which leads to the production of prefumagillin. Finally, oxidative cleavage by the monooxygenase af470 converts prefumagillin to fumagillin. In Aspergillus fumigatus (strain ATCC MYA-4609 / CBS 101355 / FGSC A1100 / Af293) (Neosartorya fumigata), this protein is Multifunctional cytochrome P450 monooxygenase af510.